A 275-amino-acid chain; its full sequence is WIMGHMVNEIYQIDEFVDLGANSIETDITFDDDAMAEYSYHGVPCGCMRWCHKWEYVNDFLEGLRRATTPGDSKYRKQLILVVFDLKTGDLSSSTAYKGGKLFAEKLLRYYWNGGSNGGRAYIIISIPDIDHYAFISGFRDALKKSGHEDLLAKVGYDFSGNDDLNSIRSALHKAGVKDREHVWQSDGITNCLLRSLDRVNEAVKNRDSSNGYISKMYYWTIEKYATVRDALNAEVDGIMTNYPDVIVNVLNEDSFKNRFRMATFDDNPWELFKR.

The active site involves H5. Mg(2+)-binding residues include E25 and D27. H41 (nucleophile) is an active-site residue. 2 cysteine pairs are disulfide-bonded: C45–C51 and C47–C192. D85 is a binding site for Mg(2+).

Belongs to the arthropod phospholipase D family. Class II subfamily. Requires Mg(2+) as cofactor. In terms of tissue distribution, expressed by the venom gland.

It is found in the secreted. The catalysed reaction is an N-(acyl)-sphingosylphosphocholine = an N-(acyl)-sphingosyl-1,3-cyclic phosphate + choline. It carries out the reaction an N-(acyl)-sphingosylphosphoethanolamine = an N-(acyl)-sphingosyl-1,3-cyclic phosphate + ethanolamine. It catalyses the reaction a 1-acyl-sn-glycero-3-phosphocholine = a 1-acyl-sn-glycero-2,3-cyclic phosphate + choline. The enzyme catalyses a 1-acyl-sn-glycero-3-phosphoethanolamine = a 1-acyl-sn-glycero-2,3-cyclic phosphate + ethanolamine. Dermonecrotic toxins cleave the phosphodiester linkage between the phosphate and headgroup of certain phospholipids (sphingolipid and lysolipid substrates), forming an alcohol (often choline) and a cyclic phosphate. This toxin acts on sphingomyelin (SM). It may also act on ceramide phosphoethanolamine (CPE), lysophosphatidylcholine (LPC) and lysophosphatidylethanolamine (LPE), but not on lysophosphatidylserine (LPS), and lysophosphatidylglycerol (LPG). It acts by transphosphatidylation, releasing exclusively cyclic phosphate products as second products. Induces dermonecrosis, hemolysis, increased vascular permeability, edema, inflammatory response, and platelet aggregation. In Loxosceles amazonica (Recluse spider), this protein is Dermonecrotic toxin LamSicTox-alphaIV1iii.